The sequence spans 608 residues: Altered inheritance of mitochondria protein 9, mitochondrial (608 aa).

The N-terminal 21 residues, methionine 1–serine 21, are a transit peptide targeting the mitochondrion.

Belongs to the AIM9 family.

The protein localises to the mitochondrion. The chain is Altered inheritance of mitochondria protein 9, mitochondrial (AIM9) from Clavispora lusitaniae (strain ATCC 42720) (Yeast).